The primary structure comprises 54 residues: UPF0391 membrane protein Tbd_2238 (54 aa).

A run of 2 helical transmembrane segments spans residues 5-25 and 28-48; these read ALVFFIIAIVAAVFGFSGIAA and VGIAKILFVVFLIMAIATFVV.

It belongs to the UPF0391 family.

Its subcellular location is the cell membrane. The polypeptide is UPF0391 membrane protein Tbd_2238 (Thiobacillus denitrificans (strain ATCC 25259 / T1)).